The sequence spans 223 residues: Receptor-transporting protein 2 (223 aa).

The Cytoplasmic portion of the chain corresponds to 1–193 (MSTSLTTCEW…KKGQAGFISS (193 aa)). A 3CxxC-type zinc finger spans residues 52–161 (ASGRFHCSWC…SEFCEACQEG (110 aa)). The chain crosses the membrane as a helical span at residues 194–216 (FFSFRWCLFWGTLCLVIVYLQFF). Topologically, residues 217-223 (RGRSGFL) are extracellular.

Belongs to the TMEM7 family. As to quaternary structure, interacts with olfactory receptors. Predominantly expressed in olfactory and vomeronasal organs, in mature olfactory sensory neurons.

The protein localises to the cell membrane. Specifically promotes functional cell surface expression of olfactory receptors, but not of other GPCRs. The chain is Receptor-transporting protein 2 (Rtp2) from Mus musculus (Mouse).